We begin with the raw amino-acid sequence, 737 residues long: Photosystem I P700 chlorophyll a apoprotein A2 (737 aa).

A run of 8 helical transmembrane segments spans residues 46–69 (LFST…FHIA), 135–158 (LYQG…LHLQ), 175–199 (LNHH…HVAI), 273–291 (IAHH…GHMY), 333–356 (LHFQ…QHMY), 372–398 (AALY…IFFI), 420–442 (AIIS…LYVH), and 520–538 (FLVH…LILV). Cys-562 and Cys-571 together coordinate [4Fe-4S] cluster. 2 consecutive transmembrane segments (helical) span residues 578–599 (AFYL…YWHW) and 646–668 (LAVW…MFLI). Chlorophyll a contacts are provided by His-657, Met-665, and Tyr-673. Trp-674 is a binding site for phylloquinone. A helical membrane pass occupies residues 710–730 (VVGLAHFSVGYVLTYAAFLIA).

The protein belongs to the PsaA/PsaB family. In terms of assembly, the PsaA/B heterodimer binds the P700 chlorophyll special pair and subsequent electron acceptors. PSI consists of a core antenna complex that captures photons, and an electron transfer chain that converts photonic excitation into a charge separation. The cyanobacterial PSI reaction center is composed of one copy each of PsaA,B,C,D,E,F,I,J,K,L,M and X, and forms trimeric complexes. The cofactor is PSI electron transfer chain: 5 chlorophyll a, 1 chlorophyll a', 2 phylloquinones and 3 4Fe-4S clusters. PSI core antenna: 90 chlorophyll a, 22 carotenoids, 3 phospholipids and 1 galactolipid. P700 is a chlorophyll a/chlorophyll a' dimer, A0 is one or more chlorophyll a, A1 is one or both phylloquinones and FX is a shared 4Fe-4S iron-sulfur center..

The protein resides in the cellular thylakoid membrane. The catalysed reaction is reduced [plastocyanin] + hnu + oxidized [2Fe-2S]-[ferredoxin] = oxidized [plastocyanin] + reduced [2Fe-2S]-[ferredoxin]. Its function is as follows. PsaA and PsaB bind P700, the primary electron donor of photosystem I (PSI), as well as the electron acceptors A0, A1 and FX. PSI is a plastocyanin/cytochrome c6-ferredoxin oxidoreductase, converting photonic excitation into a charge separation, which transfers an electron from the donor P700 chlorophyll pair to the spectroscopically characterized acceptors A0, A1, FX, FA and FB in turn. Oxidized P700 is reduced on the lumenal side of the thylakoid membrane by plastocyanin or cytochrome c6. The sequence is that of Photosystem I P700 chlorophyll a apoprotein A2 from Parasynechococcus marenigrum (strain WH8102).